The sequence spans 314 residues: Acetaldehyde dehydrogenase (314 aa).

Position 14–17 (14–17 (SGNI)) interacts with NAD(+). Residue C132 is the Acyl-thioester intermediate of the active site. Residues 163–171 (SAGPGTRAN) and N291 each bind NAD(+).

The protein belongs to the acetaldehyde dehydrogenase family.

It carries out the reaction acetaldehyde + NAD(+) + CoA = acetyl-CoA + NADH + H(+). This is Acetaldehyde dehydrogenase from Polaromonas sp. (strain JS666 / ATCC BAA-500).